A 463-amino-acid chain; its full sequence is Putative sodium-coupled neutral amino acid transporter 11 (463 aa).

The tract at residues 1–27 is disordered; that stretch reads MGYPGQRPVIPPQSHRDDRETLVSEHK. Residues 14–25 are compositionally biased toward basic and acidic residues; it reads SHRDDRETLVSE. A run of 11 helical transmembrane segments spans residues 38-58, 65-85, 105-125, 150-170, 178-198, 225-245, 256-276, 298-320, 336-356, 358-378, and 397-417; these read AVFN…PYSM, LGIL…ILLI, GFPG…IAMI, LLIG…LPLS, LGKI…IVVA, VGVM…YGSL, IIHV…TCGY, VTFG…CFVT, VCHI…SLLI, CLGI…IFII, and IMSC…FVMA. N-linked (GlcNAc...) asparagine glycosylation is found at Asn437, Asn442, and Asn458.

This sequence belongs to the amino acid/polyamine transporter 2 family.

Its subcellular location is the membrane. Its function is as follows. Putative sodium-dependent amino acid/proton antiporter. The sequence is that of Putative sodium-coupled neutral amino acid transporter 11 (SLC38A11) from Bos taurus (Bovine).